A 953-amino-acid chain; its full sequence is Nucleotide-binding oligomerization domain-containing protein 1 (953 aa).

The 91-residue stretch at glutamate 15 to leucine 105 folds into the CARD domain. One can recognise an NACHT domain in the interval glutamate 196–leucine 531. Glycine 202 to serine 209 contributes to the ATP binding site. S-palmitoyl cysteine attachment occurs at residues cysteine 558 and cysteine 567. 9 LRR repeats span residues leucine 632–leucine 656, phenylalanine 702–proline 725, phenylalanine 727–glutamate 750, tyrosine 755–lysine 778, cysteine 783–leucine 806, histidine 839–arginine 862, asparagine 867–methionine 891, asparagine 895–aspartate 918, and asparagine 923–aspartate 946. Cysteine 952 is lipidated: S-palmitoyl cysteine.

Belongs to the NOD1-NOD2 family. In terms of assembly, homooligomer: homooligomerizes following ligand-binding, promoting RIPK2 recruitment. Interacts (via CARD domain) with RIPK2 (via CARD domain). Following RIPK2 recruitment, RIPK2 homooligomerizes via its CARD domain and forms long filaments named RIPosomes. Interacts with ARHGEF2. Interacts (via CARD domain) with ubiquitin; inhibiting interaction with RIPK2. Interacts with NLRP10 and recruits it to the cell membrane following invasive bacterial infection. Interacts with IFIH1; this interaction promotes transcription of antiviral genes and inhibition of viral replication. Interacts with IRGM; promoting NOD1 degradation. Interacts with ATG16L1. In terms of processing, palmitoylated. Palmitoylation is required for proper recruitment to the bacterial entry site and hence for proper signaling upon cognate peptidoglycan detection. Post-translationally, ubiquitinated. 'Lys-48'-linked polyubiquitination by RNF34 promotes proteasomal degradation and thereby negatively regulates NOD1 for instance in NF-kappa-B activation. Degraded via selective autophagy following interaction with IRGM. IRGM promotes NOD1-RIPK2 RIPosome recruitment to autophagosome membranes, promoting their SQSTM1/p62-dependent autophagic degradation. In terms of tissue distribution, highly expressed in adult heart, skeletal muscle, pancreas, spleen and ovary. Also detected in placenta, lung, liver, kidney, thymus, testis, small intestine and colon.

It localises to the cell membrane. Its subcellular location is the apical cell membrane. The protein localises to the basolateral cell membrane. It is found in the cytoplasm. Functionally, pattern recognition receptor (PRR) that detects bacterial peptidoglycan fragments and other danger signals and thus participates in both innate and adaptive immune responses. Specifically recognizes and binds gamma-D-glutamyl-meso-diaminopimelic acid (iE-DAP), a dipeptide present in peptidoglycan of Gram-negative bacteria. Preferentially binds iE-DAP in tripeptide-containing muropeptides (MurNAc-TriDAP or TriDAP). Ligand binding triggers oligomerization that facilitates the binding and subsequent activation of the proximal adapter receptor-interacting RIPK2. Following recruitment, RIPK2 undergoes 'Met-1'- (linear) and 'Lys-63'-linked polyubiquitination by E3 ubiquitin-protein ligases XIAP, BIRC2, BIRC3 and the LUBAC complex, becoming a scaffolding protein for downstream effectors, triggering activation of the NF-kappa-B and MAP kinases signaling. This in turn leads to the transcriptional activation of hundreds of genes involved in immune response. Also acts as a regulator of antiviral response elicited by dsRNA and the expression of RLR pathway members by targeting IFIH1 and TRAF3 to modulate the formation of IFIH1-MAVS and TRAF3-MAVS complexes leading to increased transcription of type I IFNs. Also acts as a regulator of autophagy via its interaction with ATG16L1, possibly by recruiting ATG16L1 at the site of bacterial entry. Besides recognizing pathogens, also involved in the endoplasmic reticulum stress response: acts by sensing and binding to the cytosolic metabolite sphingosine-1-phosphate generated in response to endoplasmic reticulum stress, initiating an inflammation process that leads to activation of the NF-kappa-B and MAP kinases signaling. In addition, plays a role in insulin trafficking in beta cells in a cell-autonomous manner. Mechanistically, upon recognizing cognate ligands, NOD1 and RIPK2 localize to insulin vesicles where they recruit RAB1A to direct insulin trafficking through the cytoplasm. Its function is as follows. In contrast to isoform 1, does not efficiently recognize and bind gamma-D-glutamyl-meso-diaminopimelic acid (iE-DAP) ligand. This Homo sapiens (Human) protein is Nucleotide-binding oligomerization domain-containing protein 1.